Here is a 509-residue protein sequence, read N- to C-terminus: Heat shock 70 kDa protein 14 (509 aa).

The protein belongs to the heat shock protein 70 family. Component of ribosome-associated complex (RAC), a heterodimer composed of Hsp70/DnaK-type chaperone HSPA14 and Hsp40/DnaJ-type chaperone DNAJC2.

Its subcellular location is the cytoplasm. The protein resides in the cytosol. In terms of biological role, component of the ribosome-associated complex (RAC), a complex involved in folding or maintaining nascent polypeptides in a folding-competent state. In the RAC complex, binds to the nascent polypeptide chain, while DNAJC2 stimulates its ATPase activity. The chain is Heat shock 70 kDa protein 14 (HSPA14) from Bos taurus (Bovine).